The sequence spans 428 residues: Enolase (428 aa).

Q163 provides a ligand contact to (2R)-2-phosphoglycerate. Catalysis depends on E205, which acts as the Proton donor. Residues D242, E285, and D312 each coordinate Mg(2+). Residues K337, R366, S367, and K388 each coordinate (2R)-2-phosphoglycerate. The active-site Proton acceptor is the K337.

It belongs to the enolase family. Mg(2+) is required as a cofactor.

It localises to the cytoplasm. The protein resides in the secreted. It is found in the cell surface. The enzyme catalyses (2R)-2-phosphoglycerate = phosphoenolpyruvate + H2O. The protein operates within carbohydrate degradation; glycolysis; pyruvate from D-glyceraldehyde 3-phosphate: step 4/5. Catalyzes the reversible conversion of 2-phosphoglycerate (2-PG) into phosphoenolpyruvate (PEP). It is essential for the degradation of carbohydrates via glycolysis. This is Enolase from Brevibacillus brevis (strain 47 / JCM 6285 / NBRC 100599).